The sequence spans 210 residues: Aminoglycoside 2'-N-acetyltransferase (210 aa).

Positions isoleucine 21–proline 189 constitute an N-acetyltransferase domain. Substrate is bound by residues aspartate 54 and glutamate 106 to alanine 107. CoA is bound by residues valine 108–valine 110 and arginine 115–glycine 120. Residues serine 141 and glutamate 176–aspartate 177 each bind substrate.

Belongs to the AAC(2')-I acetyltransferase family. In terms of assembly, homodimer.

Catalyzes the coenzyme A-dependent acetylation of the 2' hydroxyl or amino group of a broad spectrum of aminoglycosides. It confers resistance to aminoglycosides. This chain is Aminoglycoside 2'-N-acetyltransferase (aac), found in Mycolicibacterium smegmatis (strain ATCC 700084 / mc(2)155) (Mycobacterium smegmatis).